The primary structure comprises 655 residues: MQAARMAASLGRQLLRLGGGSSRLTALLGQPRPGPARRPYAGGAAQLALDKSDSHPSDALTRKKPAKAESKSFAVGMFKGQLTTDQVFPYPSVLNEEQTQFLKELVEPVSRFFEEVNDPAKNDALEMVEETTWQGLKELGAFGLQVPSELGGVGLCNTQYARLVEIVGMHDLGVGITLGAHQSIGFKGILLFGTKAQKEKYLPKLASGETVAAFCLTEPSSGSDAASIRTSAVPSPCGKYYTLNGSKLWISNGGLADIFTVFAKTPVTDPATGAVKEKITAFVVERGFGGITHGPPEKKMGIKASNTAEVFFDGVRVPSENVLGEVGSGFKVAMHILNNGRFGMAAALAGTMRGIIAKAVDHATNRTQFGEKIHNFGLIQEKLARMVMLQYVTESMAYMVSANMDQGATDFQIEAAISKIFGSEAAWKVTDECIQIMGGMGFMKEPGVERVLRDLRIFRIFEGTNDILRLFVALQGCMDKGKELSGLGSALKNPFGNAGLLLGEAGKQLRRRAGLGSGLSLSGLVHPELSRSGELAVRALEQFATVVEAKLIKHKKGIVNEQFLLQRLADGAIDLYAMVVVLSRASRSLSEGHPTAQHEKMLCDTWCIEAAARIREGMAALQSDPWQQELYRNFKSISKALVERGGVVTSNPLGF.

A mitochondrion-targeting transit peptide spans 1 to 40 (MQAARMAASLGRQLLRLGGGSSRLTALLGQPRPGPARRPY). Residues 23 to 42 (RLTALLGQPRPGPARRPYAG) are disordered. The catalytic stretch occupies residues 41–482 (AGGAAQLALD…ALQGCMDKGK (442 aa)). K51 bears the N6-acetyllysine mark. K71 is subject to N6-acetyllysine; alternate. Residue K71 is modified to N6-succinyllysine; alternate. Position 195 is an N6-succinyllysine (K195). 214 to 223 (FCLTEPSSGS) lines the FAD pocket. C237 carries the S-nitrosocysteine modification. N6-acetyllysine; alternate is present on K239. An N6-succinyllysine; alternate modification is found at K239. Residue 249–251 (WIS) participates in FAD binding. 2 positions are modified to N6-acetyllysine; alternate: K276 and K278. Residues K276 and K278 each carry the N6-succinyllysine; alternate modification. K298 carries the post-translational modification N6-acetyllysine. Residue K331 is modified to N6-acetyllysine; alternate. At K331 the chain carries N6-succinyllysine; alternate. K372 is subject to N6-succinyllysine. Substrate is bound at residue 461-463 (FEG). Residue E462 is the Proton acceptor of the active site. Position 464–466 (464–466 (TND)) interacts with FAD. K482 carries the post-translational modification N6-acetyllysine; alternate. Residue K482 is modified to N6-succinyllysine; alternate. The tract at residues 483–516 (ELSGLGSALKNPFGNAGLLLGEAGKQLRRRAGLG) is membrane-anchoring. Phosphoserine is present on residues S517 and S522. K550 bears the N6-acetyllysine mark. K556 bears the N6-acetyllysine; alternate mark. Position 556 is an N6-succinyllysine; alternate (K556). Q562 serves as a coordination point for FAD. K639 bears the N6-succinyllysine mark.

This sequence belongs to the acyl-CoA dehydrogenase family. Homodimer. Homodimerizes after import into the mitochondrion. FAD is required as a cofactor. In terms of processing, S-nitrosylation at Cys-237 in liver improves catalytic efficiency. As to expression, predominantly expressed in heart and skeletal muscle (at protein level). Also detected in kidney and liver (at protein level).

Its subcellular location is the mitochondrion inner membrane. It carries out the reaction a very-long-chain 2,3-saturated fatty acyl-CoA + oxidized [electron-transfer flavoprotein] + H(+) = a very-long-chain (2E)-enoyl-CoA + reduced [electron-transfer flavoprotein]. The enzyme catalyses decanoyl-CoA + oxidized [electron-transfer flavoprotein] + H(+) = (2E)-decenoyl-CoA + reduced [electron-transfer flavoprotein]. It catalyses the reaction dodecanoyl-CoA + oxidized [electron-transfer flavoprotein] + H(+) = (2E)-dodecenoyl-CoA + reduced [electron-transfer flavoprotein]. The catalysed reaction is tetradecanoyl-CoA + oxidized [electron-transfer flavoprotein] + H(+) = (2E)-tetradecenoyl-CoA + reduced [electron-transfer flavoprotein]. It carries out the reaction oxidized [electron-transfer flavoprotein] + hexadecanoyl-CoA + H(+) = (2E)-hexadecenoyl-CoA + reduced [electron-transfer flavoprotein]. The enzyme catalyses octadecanoyl-CoA + oxidized [electron-transfer flavoprotein] + H(+) = (2E)-octadecenoyl-CoA + reduced [electron-transfer flavoprotein]. It catalyses the reaction eicosanoyl-CoA + oxidized [electron-transfer flavoprotein] + H(+) = (2E)-eicosenoyl-CoA + reduced [electron-transfer flavoprotein]. The catalysed reaction is docosanoyl-CoA + oxidized [electron-transfer flavoprotein] + H(+) = (2E)-docosenoyl-CoA + reduced [electron-transfer flavoprotein]. It carries out the reaction tetracosanoyl-CoA + oxidized [electron-transfer flavoprotein] + H(+) = (2E)-tetracosenoyl-CoA + reduced [electron-transfer flavoprotein]. The enzyme catalyses (9Z)-hexadecenoyl-CoA + oxidized [electron-transfer flavoprotein] + H(+) = (2E,9Z)-hexadecadienoyl-CoA + reduced [electron-transfer flavoprotein]. It catalyses the reaction oxidized [electron-transfer flavoprotein] + (9Z)-octadecenoyl-CoA + H(+) = (2E,9Z)-octadecadienoyl-CoA + reduced [electron-transfer flavoprotein]. The protein operates within lipid metabolism; mitochondrial fatty acid beta-oxidation. Functionally, very long-chain specific acyl-CoA dehydrogenase is one of the acyl-CoA dehydrogenases that catalyze the first step of mitochondrial fatty acid beta-oxidation, an aerobic process breaking down fatty acids into acetyl-CoA and allowing the production of energy from fats. The first step of fatty acid beta-oxidation consists in the removal of one hydrogen from C-2 and C-3 of the straight-chain fatty acyl-CoA thioester, resulting in the formation of trans-2-enoyl-CoA. Among the different mitochondrial acyl-CoA dehydrogenases, very long-chain specific acyl-CoA dehydrogenase acts specifically on acyl-CoAs with saturated 12 to 24 carbons long primary chains. This is Very long-chain specific acyl-CoA dehydrogenase, mitochondrial from Homo sapiens (Human).